Reading from the N-terminus, the 98-residue chain is NADH-ubiquinone oxidoreductase chain 4L (98 aa).

Helical transmembrane passes span 1–21 (MTSI…GVLI), 28–48 (STLL…ALLI), and 59–79 (APII…ALLV).

The protein belongs to the complex I subunit 4L family. As to quaternary structure, core subunit of respiratory chain NADH dehydrogenase (Complex I) which is composed of 45 different subunits.

It localises to the mitochondrion inner membrane. It carries out the reaction a ubiquinone + NADH + 5 H(+)(in) = a ubiquinol + NAD(+) + 4 H(+)(out). Its function is as follows. Core subunit of the mitochondrial membrane respiratory chain NADH dehydrogenase (Complex I) which catalyzes electron transfer from NADH through the respiratory chain, using ubiquinone as an electron acceptor. Part of the enzyme membrane arm which is embedded in the lipid bilayer and involved in proton translocation. The protein is NADH-ubiquinone oxidoreductase chain 4L (MT-ND4L) of Trichosurus vulpecula (Brush-tailed possum).